A 190-amino-acid polypeptide reads, in one-letter code: Probable nicotinate-nucleotide adenylyltransferase (190 aa).

Belongs to the NadD family.

It catalyses the reaction nicotinate beta-D-ribonucleotide + ATP + H(+) = deamido-NAD(+) + diphosphate. Its pathway is cofactor biosynthesis; NAD(+) biosynthesis; deamido-NAD(+) from nicotinate D-ribonucleotide: step 1/1. Functionally, catalyzes the reversible adenylation of nicotinate mononucleotide (NaMN) to nicotinic acid adenine dinucleotide (NaAD). The polypeptide is Probable nicotinate-nucleotide adenylyltransferase (Borrelia hermsii (strain HS1 / DAH)).